Here is a 273-residue protein sequence, read N- to C-terminus: Glutamate 5-kinase (273 aa).

ATP is bound at residue Lys15. Substrate contacts are provided by Ser55, Asp142, and Asn158. ATP is bound by residues 178-179 (SD) and 220-226 (TGGMLSK).

Belongs to the glutamate 5-kinase family.

It localises to the cytoplasm. The catalysed reaction is L-glutamate + ATP = L-glutamyl 5-phosphate + ADP. It participates in amino-acid biosynthesis; L-proline biosynthesis; L-glutamate 5-semialdehyde from L-glutamate: step 1/2. In terms of biological role, catalyzes the transfer of a phosphate group to glutamate to form L-glutamate 5-phosphate. The sequence is that of Glutamate 5-kinase from Streptococcus pyogenes serotype M18 (strain MGAS8232).